The sequence spans 100 residues: RxLR effector protein PITG_18683 (100 aa).

The first 22 residues, 1-22 (MRSFLYGILAFAVLARSSAVAA), serve as a signal peptide directing secretion. Residues 43-57 (RSLRVEAQEVIQSGR) carry the RxLR-dEER motif. The Calmodulin-binding motif motif lies at 78–82 (KPDIK).

The protein belongs to the RxLR effector family. In terms of assembly, interacts with the host calmodulin.

It is found in the secreted. The protein resides in the host cell. Functionally, secreted effector that associates with calmodulin to interfere with plant defense-associated calcium signaling in hosts. In Phytophthora infestans (strain T30-4) (Potato late blight agent), this protein is RxLR effector protein PITG_18683.